The chain runs to 238 residues: Ribonuclease PH (238 aa).

Residues Arg86 and 124–126 (GTR) contribute to the phosphate site.

The protein belongs to the RNase PH family. As to quaternary structure, homohexameric ring arranged as a trimer of dimers.

The enzyme catalyses tRNA(n+1) + phosphate = tRNA(n) + a ribonucleoside 5'-diphosphate. Its function is as follows. Phosphorolytic 3'-5' exoribonuclease that plays an important role in tRNA 3'-end maturation. Removes nucleotide residues following the 3'-CCA terminus of tRNAs; can also add nucleotides to the ends of RNA molecules by using nucleoside diphosphates as substrates, but this may not be physiologically important. Probably plays a role in initiation of 16S rRNA degradation (leading to ribosome degradation) during starvation. This chain is Ribonuclease PH, found in Vibrio atlanticus (strain LGP32) (Vibrio splendidus (strain Mel32)).